The following is a 287-amino-acid chain: Flagellin (287 aa).

The protein belongs to the bacterial flagellin family.

The protein localises to the secreted. The protein resides in the bacterial flagellum. Flagellin is the subunit protein which polymerizes to form the filaments of bacterial flagella. This Listeria innocua serovar 6a (strain ATCC BAA-680 / CLIP 11262) protein is Flagellin (flaA).